The following is a 216-amino-acid chain: DNA gyrase subunit B (216 aa).

Residues 140-216 (SELYLVEGDS…PDKLRYHKII (77 aa)) enclose the Toprim domain.

It belongs to the type II topoisomerase GyrB family. In terms of assembly, heterotetramer, composed of two GyrA and two GyrB chains. In the heterotetramer, GyrA contains the active site tyrosine that forms a transient covalent intermediate with DNA, while GyrB binds cofactors and catalyzes ATP hydrolysis.

Its subcellular location is the cytoplasm. It catalyses the reaction ATP-dependent breakage, passage and rejoining of double-stranded DNA.. Its function is as follows. A type II topoisomerase that negatively supercoils closed circular double-stranded (ds) DNA in an ATP-dependent manner to modulate DNA topology and maintain chromosomes in an underwound state. Negative supercoiling favors strand separation, and DNA replication, transcription, recombination and repair, all of which involve strand separation. Also able to catalyze the interconversion of other topological isomers of dsDNA rings, including catenanes and knotted rings. Type II topoisomerases break and join 2 DNA strands simultaneously in an ATP-dependent manner. The sequence is that of DNA gyrase subunit B (gyrB) from Acinetobacter sp. (strain ATCC 33308 / BD413 ErpE27).